Consider the following 554-residue polypeptide: MKLLKDSGAALLALFFVLVYLLPVNSRLLWQPDETRYAEISREMLQRGDWVVPYFMDIRYFEKPVAGYWFNNISQWIFGDSNFAVRFGSIFSTALSAVLVYWLATLLWRNRSTSVLATLIYLSFLLVFGIGTYAVLDPMISLWLTAAMVSFYLTLKAENWQQKVGAYALLGVACGMGFMTKGFLALAVPVIAVLPIVIQQKRIKDLVVFGPIAIVCAVLLSLPWALAIAQREPDFWNYFFWVEHIQRFAEASAQHKSPIWYYLPILCIGVLPWLGLLPGALFKGWRERATKPELFFLLSWVVMPLLFFSVAKGKLPTYILPCMAPLSLLMAAYATDCANNIRMRALKINGVINLLFGVACALVIVVIGLGLVKDIVAYGPQENQKVWLGVLAFAGWGVTGFITLRNNARNWRWAAACPLLFILLVGYLIPQQVVDSKQPQNFIKNNFSELSSSRYVLTDSVGVAAGLAWELKRSDILMFSEKGELTYGLAYPDSQDNYISNDDFPTWLAQARKKGDVSLVVQLARNEALPAHLPSADKVNLMNRLALLWYQKTP.

Helical transmembrane passes span 4 to 24 (LKDS…LLPV), 87 to 107 (FGSI…ATLL), 115 to 135 (VLAT…TYAV), 178 to 198 (FMTK…PIVI), 206 to 226 (LVVF…PWAL), 262 to 282 (YLPI…GALF), 293 to 313 (ELFF…VAKG), 315 to 335 (LPTY…AYAT), 351 to 371 (VINL…GLGL), 384 to 404 (QKVW…FITL), and 414 to 434 (AAAC…QQVV).

It belongs to the glycosyltransferase 83 family.

Its subcellular location is the cell inner membrane. The enzyme catalyses 4-amino-4-deoxy-alpha-L-arabinopyranosyl di-trans,octa-cis-undecaprenyl phosphate + lipid IVA = lipid IIA + di-trans,octa-cis-undecaprenyl phosphate.. It participates in lipopolysaccharide metabolism; 4-amino-4-deoxy-beta-L-arabinose-lipid A biosynthesis. Catalyzes the transfer of the L-Ara4N moiety of the glycolipid undecaprenyl phosphate-alpha-L-Ara4N to lipid A. The modified arabinose is attached to lipid A and is required for resistance to polymyxin and cationic antimicrobial peptides. The sequence is that of Undecaprenyl phosphate-alpha-4-amino-4-deoxy-L-arabinose arabinosyl transferase from Yersinia pseudotuberculosis serotype O:3 (strain YPIII).